We begin with the raw amino-acid sequence, 239 residues long: Ribonuclease P protein component 3 (239 aa).

This sequence belongs to the eukaryotic/archaeal RNase P protein component 3 family. As to quaternary structure, consists of a catalytic RNA component and at least 4-5 protein subunits.

It localises to the cytoplasm. The enzyme catalyses Endonucleolytic cleavage of RNA, removing 5'-extranucleotides from tRNA precursor.. Part of ribonuclease P, a protein complex that generates mature tRNA molecules by cleaving their 5'-ends. The protein is Ribonuclease P protein component 3 of Methanosarcina acetivorans (strain ATCC 35395 / DSM 2834 / JCM 12185 / C2A).